We begin with the raw amino-acid sequence, 194 residues long: Fe/S biogenesis protein NfuA (194 aa).

Residues C152 and C155 each contribute to the [4Fe-4S] cluster site.

This sequence belongs to the NfuA family. Homodimer. [4Fe-4S] cluster serves as cofactor.

Involved in iron-sulfur cluster biogenesis. Binds a 4Fe-4S cluster, can transfer this cluster to apoproteins, and thereby intervenes in the maturation of Fe/S proteins. Could also act as a scaffold/chaperone for damaged Fe/S proteins. The chain is Fe/S biogenesis protein NfuA from Pseudomonas fluorescens (strain SBW25).